The sequence spans 357 residues: Alanine racemase (357 aa).

K33 serves as the catalytic Proton acceptor; specific for D-alanine. K33 carries the N6-(pyridoxal phosphate)lysine modification. R129 contacts substrate. The active-site Proton acceptor; specific for L-alanine is Y253. Position 301 (M301) interacts with substrate.

Belongs to the alanine racemase family. Homodimer. It depends on pyridoxal 5'-phosphate as a cofactor.

It catalyses the reaction L-alanine = D-alanine. It participates in amino-acid biosynthesis; D-alanine biosynthesis; D-alanine from L-alanine: step 1/1. Its function is as follows. Catalyzes the interconversion of L-alanine and D-alanine. Is highly specific for alanine as substrate. May serve both anabolic and catabolic purposes. This is Alanine racemase from Pseudomonas taetrolens.